The following is a 1101-amino-acid chain: Furin-like protease 1, isoform 1-CRR (1101 aa).

Residues 1 to 57 (MKNDVVRWSRQPTSNTTNSSSSSRSDSNSTHKHRSKSNKLNARQLGSNAARSCQQRS) are disordered. Residues 13 to 28 (TSNTTNSSSSSRSDSN) show a composition bias toward low complexity. N15, N18, and N28 each carry an N-linked (GlcNAc...) asparagine glycan. Positions 38 to 57 (NKLNARQLGSNAARSCQQRS) are enriched in polar residues. A glycan (N-linked (GlcNAc...) asparagine) is linked at N108. The chain crosses the membrane as a helical span at residues 119 to 139 (VFLLALQFSAVVFLCNINVGF). Residues 150–163 (SAGGSSPAAPSSAP) show a composition bias toward low complexity. The interval 150–187 (SAGGSSPAAPSSAPSSPPTVAVPPPPPPSSALKVDPNG) is disordered. Residues 164–178 (SSPPTVAVPPPPPPS) are compositionally biased toward pro residues. N-linked (GlcNAc...) asparagine glycosylation occurs at N333. The region spanning 340-654 (MWYLNRGGGL…YGLMDAAEMV (315 aa)) is the Peptidase S8 domain. Residues D372 and H413 each act as charge relay system in the active site. N-linked (GlcNAc...) asparagine glycosylation is present at N426. Cystine bridges form between C430/C579 and C522/C552. The active-site Charge relay system is S587. An N-linked (GlcNAc...) asparagine glycan is attached at N606. Residues 662–791 (AVPEQQRCEI…DMIFYGTETP (130 aa)) form the P/Homo B domain. C669 and C695 form a disulfide bridge. N-linked (GlcNAc...) asparagine glycosylation is found at N727 and N859. Residues 886-915 (EEDEQDDEVTRGPVNPYSSSPMDHSLLMSN) form a disordered region. Positions 901 to 915 (PYSSSPMDHSLLMSN) are enriched in polar residues. N-linked (GlcNAc...) asparagine glycosylation occurs at N978. Residues 1014 to 1034 (TVLLLVSVIFTLMGVAVAGGI) traverse the membrane as a helical segment.

This sequence belongs to the peptidase S8 family. Furin subfamily. The cofactor is Ca(2+). As to expression, in adults, isoform 1-CRR is expressed in CNS, fat body, and female reproductive tissues, and in embryos, in anal pads, hindgut, developing antennomaxillary complex, oenocytes, clipeolabrum, pharynx, trachea, CNS and developing posterior spiracles.

The protein resides in the golgi apparatus membrane. The enzyme catalyses Release of mature proteins from their proproteins by cleavage of -Arg-Xaa-Yaa-Arg-|-Zaa- bonds, where Xaa can be any amino acid and Yaa is Arg or Lys. Releases albumin, complement component C3 and von Willebrand factor from their respective precursors.. Its function is as follows. Furin is likely to represent the ubiquitous endoprotease activity within constitutive secretory pathways and capable of cleavage at the RX(K/R)R consensus motif. The polypeptide is Furin-like protease 1, isoform 1-CRR (Fur1) (Drosophila melanogaster (Fruit fly)).